Here is a 305-residue protein sequence, read N- to C-terminus: Tyrosine recombinase XerC (305 aa).

Positions 4–95 (TSIQELIDKW…AVKNFYRFLE (92 aa)) constitute a Core-binding (CB) domain. Residues 116–298 (LLPKALSEDD…SIKHLEAVYT (183 aa)) enclose the Tyr recombinase domain. Active-site residues include Arg159, Lys182, His250, Arg253, and His276. Tyr285 serves as the catalytic O-(3'-phospho-DNA)-tyrosine intermediate.

The protein belongs to the 'phage' integrase family. XerC subfamily. Forms a cyclic heterotetrameric complex composed of two molecules of XerC and two molecules of XerD.

The protein resides in the cytoplasm. Site-specific tyrosine recombinase, which acts by catalyzing the cutting and rejoining of the recombining DNA molecules. The XerC-XerD complex is essential to convert dimers of the bacterial chromosome into monomers to permit their segregation at cell division. It also contributes to the segregational stability of plasmids. The polypeptide is Tyrosine recombinase XerC (Rickettsia felis (strain ATCC VR-1525 / URRWXCal2) (Rickettsia azadi)).